Reading from the N-terminus, the 1914-residue chain is Autophagy-related protein 2 homolog A (1914 aa).

The region spanning 14–112 (ERVCRYLLQH…LTLQPRQGSG (99 aa)) is the Chorein N-terminal domain. Residues serine 764, serine 869, serine 875, and serine 877 each carry the phosphoserine modification. Residues 1222–1243 (DLHPPPRPPSPTEIAGQKLSES) form a disordered region. Residues serine 1246, serine 1282, and serine 1290 each carry the phosphoserine modification. Positions 1299 to 1337 (GERSGAQAPLPPPGASSHTLGSKAKEHENEEEGDGDTLD) are disordered. The span at 1327 to 1337 (NEEEGDGDTLD) shows a compositional bias: acidic residues. The interval 1337–1383 (DSDEFCILDAPGLGIAPRDGEPIVTQLHPGPIIVHDGHFSQPLGSTD) is WIPI-interacting. Serine 1381 bears the Phosphoserine mark. 3 disordered regions span residues 1427-1452 (LTGP…TQGG), 1589-1634 (MVPG…SSSD), and 1803-1822 (RSLQ…QPAD). The span at 1429–1446 (GPRVSPSRSSGPNRPQNS) shows a compositional bias: low complexity.

Belongs to the ATG2 family. Interacts with ATG9A (via C-terminus). Interacts with TMEM41B. Interacts with VMP1.

It localises to the preautophagosomal structure membrane. The protein localises to the lipid droplet. Its subcellular location is the endoplasmic reticulum membrane. It carries out the reaction a 1,2-diacyl-sn-glycero-3-phospho-L-serine(in) = a 1,2-diacyl-sn-glycero-3-phospho-L-serine(out). The catalysed reaction is a 1,2-diacyl-sn-glycero-3-phosphoethanolamine(in) = a 1,2-diacyl-sn-glycero-3-phosphoethanolamine(out). Lipid transfer protein involved in autophagosome assembly. Tethers the edge of the isolation membrane (IM) to the endoplasmic reticulum (ER) and mediates direct lipid transfer from ER to IM for IM expansion. Binds to the ER exit site (ERES), which is the membrane source for autophagosome formation, and extracts phospholipids from the membrane source and transfers them to ATG9 (ATG9A or ATG9B) to the IM for membrane expansion. Lipid transfer activity is enhanced by WIPI1 and WDR45/WIPI4, which promote ATG2A-association with phosphatidylinositol 3-monophosphate (PI3P)-containing membranes. Also regulates lipid droplets morphology and distribution within the cell. Its function is as follows. (Microbial infection) Mediates the intracellular lifestyle of Cryptococcus neoformans by supporting infection. The chain is Autophagy-related protein 2 homolog A from Mus musculus (Mouse).